We begin with the raw amino-acid sequence, 344 residues long: Dihydroorotase (344 aa).

Zn(2+) contacts are provided by histidine 13 and histidine 15. Residues 15-17 (HLR) and asparagine 41 contribute to the substrate site. Zn(2+) contacts are provided by lysine 98, histidine 135, and histidine 173. An N6-carboxylysine modification is found at lysine 98. Position 135 (histidine 135) interacts with substrate. Leucine 218 serves as a coordination point for substrate. Aspartate 247 lines the Zn(2+) pocket. Aspartate 247 is a catalytic residue. The substrate site is built by histidine 251 and alanine 263.

Belongs to the metallo-dependent hydrolases superfamily. DHOase family. Class II DHOase subfamily. In terms of assembly, homodimer. Requires Zn(2+) as cofactor.

It catalyses the reaction (S)-dihydroorotate + H2O = N-carbamoyl-L-aspartate + H(+). Its pathway is pyrimidine metabolism; UMP biosynthesis via de novo pathway; (S)-dihydroorotate from bicarbonate: step 3/3. Its function is as follows. Catalyzes the reversible cyclization of carbamoyl aspartate to dihydroorotate. In Neisseria gonorrhoeae (strain NCCP11945), this protein is Dihydroorotase.